Here is a 707-residue protein sequence, read N- to C-terminus: Toxin RTX-I translocation ATP-binding protein (707 aa).

In terms of domain architecture, Peptidase C39 spans 1–125 (MDFYREEDYG…SLYQGKLILV (125 aa)). H83 is an active-site residue. An ABC transmembrane type-1 domain is found at 154-436 (FIETLIVSIF…LAQLWQDFQQ (283 aa)). 5 helical membrane passes run 158–178 (LIVS…FQVV), 188–208 (FSTL…EIVL), 295–315 (LVIL…SPIL), 387–407 (VVMV…DLSI), and 410–430 (LIAF…LAQL). An ABC transporter domain is found at 468–703 (ITFRNIRFRY…PNGLYHYLHQ (236 aa)). 502 to 509 (GRSGSGKS) contributes to the ATP binding site.

It belongs to the ABC transporter superfamily. Protein-1 exporter (TC 3.A.1.109) family. In terms of assembly, homodimer.

It localises to the cell membrane. Functionally, involved in the transport of the toxin RTX-I as well as that of RTX-II. The sequence is that of Toxin RTX-I translocation ATP-binding protein (apxIB) from Actinobacillus pleuropneumoniae (Haemophilus pleuropneumoniae).